Here is a 28-residue protein sequence, read N- to C-terminus: Short cationic peptide-1a (28 aa).

Glu-28 carries the post-translational modification Glutamic acid 1-amide.

In terms of tissue distribution, expressed by the venom gland.

It is found in the secreted. The sequence is that of Short cationic peptide-1a from Cupiennius salei (American wandering spider).